The sequence spans 134 residues: ATP synthase epsilon chain (134 aa).

It belongs to the ATPase epsilon chain family. F-type ATPases have 2 components, CF(1) - the catalytic core - and CF(0) - the membrane proton channel. CF(1) has five subunits: alpha(3), beta(3), gamma(1), delta(1), epsilon(1). CF(0) has three main subunits: a, b and c.

Its subcellular location is the cell membrane. Functionally, produces ATP from ADP in the presence of a proton gradient across the membrane. This chain is ATP synthase epsilon chain, found in Pelotomaculum thermopropionicum (strain DSM 13744 / JCM 10971 / SI).